Reading from the N-terminus, the 519-residue chain is Cytosol aminopeptidase (519 aa).

The residue at position 42 (S42) is a Phosphoserine. K45 is modified (N6-succinyllysine). S54 is subject to Phosphoserine. N6-succinyllysine is present on residues K61 and K103. 2 positions are modified to phosphoserine: S180 and S194. The Zn(2+) site is built by L202, M203, and T205. Residue K221 is modified to N6-acetyllysine; alternate. At K221 the chain carries N6-succinyllysine; alternate. S238 carries the post-translational modification Phosphoserine. K282 and D287 together coordinate Zn(2+). Substrate is bound by residues K282, D287, S292, and K294. D287 provides a ligand contact to Mg(2+). K294 is a catalytic residue. Residues R303, D305, D364, and E366 each coordinate Zn(2+). Substrate contacts are provided by D305 and D364. Positions 364 and 366 each coordinate Mg(2+). R368 is an active-site residue. K455 is subject to N6-acetyllysine; alternate. Position 455 is an N6-succinyllysine; alternate (K455). K476 is modified (N6-succinyllysine). An N6-acetyllysine; alternate modification is found at K489. At K489 the chain carries N6-succinyllysine; alternate.

Belongs to the peptidase M17 family. Homohexamer. Zn(2+) serves as cofactor. Requires Mn(2+) as cofactor.

The protein localises to the cytoplasm. The catalysed reaction is Release of an N-terminal amino acid, Xaa-|-Yaa-, in which Xaa is preferably Leu, but may be other amino acids including Pro although not Arg or Lys, and Yaa may be Pro. Amino acid amides and methyl esters are also readily hydrolyzed, but rates on arylamides are exceedingly low.. The enzyme catalyses an S-substituted L-cysteinylglycine + H2O = an S-substituted L-cysteine + glycine. It carries out the reaction L-cysteinylglycine + H2O = L-cysteine + glycine. It catalyses the reaction S-benzyl-L-cysteinylglycine + H2O = S-benzyl-L-cysteine + glycine. The catalysed reaction is Release of N-terminal proline from a peptide.. In terms of biological role, cytosolic metallopeptidase that catalyzes the removal of unsubstituted N-terminal hydrophobic amino acids from various peptides. The presence of Zn(2+) ions is essential for the peptidase activity, and the association with other cofactors can modulate the substrate spectificity of the enzyme. For instance, in the presence of Mn(2+), it displays a specific Cys-Gly hydrolyzing activity of Cys-Gly-S-conjugates. Involved in the metabolism of glutathione and in the degradation of glutathione S-conjugates, which may play a role in the control of the cell redox status. The protein is Cytosol aminopeptidase of Sus scrofa (Pig).